Reading from the N-terminus, the 422-residue chain is Multifunctional CCA protein (422 aa).

Residues glycine 8 and arginine 11 each coordinate ATP. Residues glycine 8 and arginine 11 each coordinate CTP. Residues aspartate 21 and aspartate 23 each contribute to the Mg(2+) site. Residues arginine 91, arginine 137, and arginine 140 each coordinate ATP. Residues arginine 91, arginine 137, and arginine 140 each coordinate CTP. An HD domain is found at 228–329 (TGLHSLMALE…VKLLQSCDAW (102 aa)). The disordered stretch occupies residues 403 to 422 (FKQDNAPEAQEKGGEDVGLT).

This sequence belongs to the tRNA nucleotidyltransferase/poly(A) polymerase family. Bacterial CCA-adding enzyme type 1 subfamily. In terms of assembly, monomer. Can also form homodimers and oligomers. The cofactor is Mg(2+). Ni(2+) serves as cofactor.

The enzyme catalyses a tRNA precursor + 2 CTP + ATP = a tRNA with a 3' CCA end + 3 diphosphate. It catalyses the reaction a tRNA with a 3' CCA end + 2 CTP + ATP = a tRNA with a 3' CCACCA end + 3 diphosphate. Its function is as follows. Catalyzes the addition and repair of the essential 3'-terminal CCA sequence in tRNAs without using a nucleic acid template. Adds these three nucleotides in the order of C, C, and A to the tRNA nucleotide-73, using CTP and ATP as substrates and producing inorganic pyrophosphate. tRNA 3'-terminal CCA addition is required both for tRNA processing and repair. Also involved in tRNA surveillance by mediating tandem CCA addition to generate a CCACCA at the 3' terminus of unstable tRNAs. While stable tRNAs receive only 3'-terminal CCA, unstable tRNAs are marked with CCACCA and rapidly degraded. The sequence is that of Multifunctional CCA protein from Hahella chejuensis (strain KCTC 2396).